Consider the following 256-residue polypeptide: tRNA (guanine-N(1)-)-methyltransferase (256 aa).

S-adenosyl-L-methionine contacts are provided by residues Gly-113 and 132–137 (VGDYVL).

Belongs to the RNA methyltransferase TrmD family. In terms of assembly, homodimer.

Its subcellular location is the cytoplasm. It carries out the reaction guanosine(37) in tRNA + S-adenosyl-L-methionine = N(1)-methylguanosine(37) in tRNA + S-adenosyl-L-homocysteine + H(+). Its function is as follows. Specifically methylates guanosine-37 in various tRNAs. This chain is tRNA (guanine-N(1)-)-methyltransferase, found in Coprothermobacter proteolyticus (strain ATCC 35245 / DSM 5265 / OCM 4 / BT).